Here is a 1174-residue protein sequence, read N- to C-terminus: Male determiner protein Mdmd(II) (1174 aa).

The segment covering 1 to 15 has biased composition (basic and acidic residues); the sequence is MNATDAESRKPENKP. Disordered stretches follow at residues 1–51, 80–109, and 136–259; these read MNAT…SGQR, KDGS…HPVE, and KQLS…LRRS. Residues 16–35 are compositionally biased toward low complexity; it reads SSESSSSGSTSGSSDGEVSS. Polar residues predominate over residues 36–47; the sequence is KTYFKNNKSKVL. Positions 80–92 are enriched in basic and acidic residues; it reads KDGSNEMLPKEDS. Positions 93–102 are enriched in polar residues; sequence INTNHNYTTD. A compositionally biased stretch (low complexity) spans 138–153; sequence LSAYRSRSRSTRLSYS. Residues 183–200 show a composition bias toward basic and acidic residues; the sequence is HGRDSSTTKRSVSRDKDN. The span at 201-223 shows a compositional bias: basic residues; sequence RLRRRIGSSRSHTRSHSRFRRSE. Basic and acidic residues predominate over residues 235 to 259; the sequence is RSQERRHERRRSMSSDYERIALRRS. Positions 348–531 constitute an MIF4G domain; the sequence is KKYIHGYINK…KVLFQVRRDG (184 aa). Residues 597–608 are compositionally biased toward low complexity; the sequence is DSDGSFGSGSNS. Residues 597 to 616 form a disordered region; the sequence is DSDGSFGSGSNSETALSDCD. An MI domain is found at 641–757; that stretch reads ALRRTIYLTL…SWDVLDCIKL (117 aa). The segment covering 840–857 has biased composition (low complexity); the sequence is SAPSSSSSSSLSSELSAP. 2 disordered regions span residues 840-1045 and 1095-1133; these read SAPS…SRTK and RKDN…NHSR. Basic residues predominate over residues 869–909; that stretch reads KKKHKGKNKKMTKKKNPSKKKEKTKKIVGKNKIAAKNKTIK. The segment covering 910 to 924 has biased composition (basic and acidic residues); sequence RRTDKDNSSSKDNFL. Residues 926-957 are compositionally biased toward low complexity; it reads SESSSNESISLDSLSSELFAPSSYSSSESSND. The span at 963 to 1001 shows a compositional bias: basic residues; the sequence is KHKGKNKKMTKKKNPSNKREKTKKKLSKNKKAPNKNTKK. Over residues 1010–1020 the composition is skewed to low complexity; sequence SSESSISESKS. Residues 1034–1045 are compositionally biased toward basic residues; sequence RKKRVTSKSRTK. Residues 1095 to 1118 show a composition bias toward basic and acidic residues; it reads RKDNYGNRQNHEISQRHDSEIKRR. The span at 1119-1130 shows a compositional bias: basic residues; it reads REERKKRHHEKN.

Belongs to the CWC22 family. Component of the spliceosome C complex.

Its subcellular location is the nucleus speckle. Its function is as follows. Male determiner protein (M-factor) that controls male somatic sexual differentiation. Acts as a dominant factor that regulates the mRNA splicing of transformer (tra) and doublesex (dsx) transcripts and promotes expression of male splice forms of tra and dsx. Probably acts as a component of the spliceosome C complex required for mRNA splicing factor and exon-junction complex (EJC) assembly. Hinders eIF4AIII from non-specifically binding RNA and escorts it to the splicing machinery to promote EJC assembly on mature mRNAs. This Musca domestica (House fly) protein is Male determiner protein Mdmd(II).